A 615-amino-acid polypeptide reads, in one-letter code: ATP-dependent zinc metalloprotease FtsH (615 aa).

The Cytoplasmic segment spans residues 1–8 (MAMNKDKP). A helical membrane pass occupies residues 9–29 (WTLYLLAVGLAVLAAVQFGLF). Over 30 to 104 (SQPAVQAIPY…FSGVVEDNTV (75 aa)) the chain is Periplasmic. Residues 105–125 (ATVMGALMPLLMLLALWYFLF) traverse the membrane as a helical segment. Residues 126-615 (HGLGQKQGLG…ATYVLVDATK (490 aa)) lie on the Cytoplasmic side of the membrane. 198–205 (GPPGTGKT) contributes to the ATP binding site. His420 serves as a coordination point for Zn(2+). Residue Glu421 is part of the active site. Zn(2+)-binding residues include His424 and Asp497.

The protein in the central section; belongs to the AAA ATPase family. In the C-terminal section; belongs to the peptidase M41 family. In terms of assembly, homohexamer. It depends on Zn(2+) as a cofactor.

It is found in the cell inner membrane. Acts as a processive, ATP-dependent zinc metallopeptidase for both cytoplasmic and membrane proteins. Plays a role in the quality control of integral membrane proteins. This chain is ATP-dependent zinc metalloprotease FtsH, found in Pseudomonas putida (strain ATCC 700007 / DSM 6899 / JCM 31910 / BCRC 17059 / LMG 24140 / F1).